A 434-amino-acid polypeptide reads, in one-letter code: Glutamate-1-semialdehyde 2,1-aminomutase (434 aa).

Position 266 is an N6-(pyridoxal phosphate)lysine (lysine 266).

It belongs to the class-III pyridoxal-phosphate-dependent aminotransferase family. HemL subfamily. As to quaternary structure, homodimer. Pyridoxal 5'-phosphate serves as cofactor.

The protein localises to the cytoplasm. It catalyses the reaction (S)-4-amino-5-oxopentanoate = 5-aminolevulinate. It functions in the pathway porphyrin-containing compound metabolism; protoporphyrin-IX biosynthesis; 5-aminolevulinate from L-glutamyl-tRNA(Glu): step 2/2. This is Glutamate-1-semialdehyde 2,1-aminomutase from Fusobacterium nucleatum subsp. nucleatum (strain ATCC 25586 / DSM 15643 / BCRC 10681 / CIP 101130 / JCM 8532 / KCTC 2640 / LMG 13131 / VPI 4355).